The chain runs to 311 residues: Ribosomal RNA small subunit methyltransferase H (311 aa).

S-adenosyl-L-methionine is bound by residues 32–34 (AGH), D52, F79, D100, and Q107.

The protein belongs to the methyltransferase superfamily. RsmH family.

The protein resides in the cytoplasm. The catalysed reaction is cytidine(1402) in 16S rRNA + S-adenosyl-L-methionine = N(4)-methylcytidine(1402) in 16S rRNA + S-adenosyl-L-homocysteine + H(+). Its function is as follows. Specifically methylates the N4 position of cytidine in position 1402 (C1402) of 16S rRNA. This chain is Ribosomal RNA small subunit methyltransferase H, found in Staphylococcus carnosus (strain TM300).